Reading from the N-terminus, the 154-residue chain is Ribosomal RNA large subunit methyltransferase H (154 aa).

Residues leucine 71 and glycine 103 each contribute to the S-adenosyl-L-methionine site.

This sequence belongs to the RNA methyltransferase RlmH family. In terms of assembly, homodimer.

The protein localises to the cytoplasm. It carries out the reaction pseudouridine(1915) in 23S rRNA + S-adenosyl-L-methionine = N(3)-methylpseudouridine(1915) in 23S rRNA + S-adenosyl-L-homocysteine + H(+). In terms of biological role, specifically methylates the pseudouridine at position 1915 (m3Psi1915) in 23S rRNA. The sequence is that of Ribosomal RNA large subunit methyltransferase H from Solidesulfovibrio magneticus (strain ATCC 700980 / DSM 13731 / RS-1) (Desulfovibrio magneticus).